A 101-amino-acid chain; its full sequence is Small ribosomal subunit protein uS10 (101 aa).

Belongs to the universal ribosomal protein uS10 family. Part of the 30S ribosomal subunit.

Functionally, involved in the binding of tRNA to the ribosomes. This Mycoplasmopsis synoviae (strain 53) (Mycoplasma synoviae) protein is Small ribosomal subunit protein uS10.